A 132-amino-acid polypeptide reads, in one-letter code: Small ribosomal subunit protein uS8 (132 aa).

This sequence belongs to the universal ribosomal protein uS8 family. In terms of assembly, part of the 30S ribosomal subunit. Contacts proteins S5 and S12.

One of the primary rRNA binding proteins, it binds directly to 16S rRNA central domain where it helps coordinate assembly of the platform of the 30S subunit. The protein is Small ribosomal subunit protein uS8 of Parvibaculum lavamentivorans (strain DS-1 / DSM 13023 / NCIMB 13966).